The following is a 217-amino-acid chain: Large ribosomal subunit protein uL29m (217 aa).

The protein belongs to the universal ribosomal protein uL29 family. As to quaternary structure, component of the mitochondrial large ribosomal subunit. Mature mitochondrial ribosomes consist of a small (37S) and a large (54S) subunit. The 37S subunit contains at least 33 different proteins and 1 molecule of RNA (15S). The 54S subunit contains at least 45 different proteins and 1 molecule of RNA (21S).

It localises to the mitochondrion. The chain is Large ribosomal subunit protein uL29m (mrpl4) from Aspergillus fumigatus (strain ATCC MYA-4609 / CBS 101355 / FGSC A1100 / Af293) (Neosartorya fumigata).